Consider the following 111-residue polypeptide: U-scoloptoxin(16)-Er8a (111 aa).

Residues 1-26 (MTSTRKLSVSCLIVFMVSSLIAVSSG) form the signal peptide.

This sequence belongs to the scoloptoxin-16 family. In terms of processing, contains 4 disulfide bonds. In terms of tissue distribution, expressed by the venom gland.

The protein resides in the secreted. In Ethmostigmus rubripes (Giant centipede), this protein is U-scoloptoxin(16)-Er8a.